Here is an 85-residue protein sequence, read N- to C-terminus: Putative transmembrane protein ORF28 (85 aa).

The next 2 helical transmembrane spans lie at 32 to 52 and 59 to 79; these read IMLL…VQIV and LLSV…MLGI.

It localises to the host membrane. The sequence is that of Putative transmembrane protein ORF28 from Haloarcula hispanica (His1V).